Here is a 456-residue protein sequence, read N- to C-terminus: Bifunctional protein GlmU (456 aa).

The interval 1 to 228 (MSARLAAIVL…PQEIFGINDR (228 aa)) is pyrophosphorylase. Residues 10 to 13 (LAAG), lysine 24, glutamine 75, and 80 to 81 (GT) each bind UDP-N-acetyl-alpha-D-glucosamine. Aspartate 105 is a binding site for Mg(2+). Residues glycine 142, glutamate 157, asparagine 172, and asparagine 226 each contribute to the UDP-N-acetyl-alpha-D-glucosamine site. Asparagine 226 is a binding site for Mg(2+). Residues 229–249 (LQLSQASRILNERTLVGLMLS) form a linker region. Residues 250–456 (GVTIVDPLRV…KAPYERTEDG (207 aa)) are N-acetyltransferase. UDP-N-acetyl-alpha-D-glucosamine-binding residues include arginine 331 and lysine 349. Histidine 361 functions as the Proton acceptor in the catalytic mechanism. Tyrosine 364 and asparagine 375 together coordinate UDP-N-acetyl-alpha-D-glucosamine. Residues alanine 378, 384-385 (NY), alanine 421, and arginine 437 contribute to the acetyl-CoA site.

In the N-terminal section; belongs to the N-acetylglucosamine-1-phosphate uridyltransferase family. The protein in the C-terminal section; belongs to the transferase hexapeptide repeat family. In terms of assembly, homotrimer. Requires Mg(2+) as cofactor.

The protein resides in the cytoplasm. The enzyme catalyses alpha-D-glucosamine 1-phosphate + acetyl-CoA = N-acetyl-alpha-D-glucosamine 1-phosphate + CoA + H(+). The catalysed reaction is N-acetyl-alpha-D-glucosamine 1-phosphate + UTP + H(+) = UDP-N-acetyl-alpha-D-glucosamine + diphosphate. The protein operates within nucleotide-sugar biosynthesis; UDP-N-acetyl-alpha-D-glucosamine biosynthesis; N-acetyl-alpha-D-glucosamine 1-phosphate from alpha-D-glucosamine 6-phosphate (route II): step 2/2. It functions in the pathway nucleotide-sugar biosynthesis; UDP-N-acetyl-alpha-D-glucosamine biosynthesis; UDP-N-acetyl-alpha-D-glucosamine from N-acetyl-alpha-D-glucosamine 1-phosphate: step 1/1. It participates in bacterial outer membrane biogenesis; LPS lipid A biosynthesis. In terms of biological role, catalyzes the last two sequential reactions in the de novo biosynthetic pathway for UDP-N-acetylglucosamine (UDP-GlcNAc). The C-terminal domain catalyzes the transfer of acetyl group from acetyl coenzyme A to glucosamine-1-phosphate (GlcN-1-P) to produce N-acetylglucosamine-1-phosphate (GlcNAc-1-P), which is converted into UDP-GlcNAc by the transfer of uridine 5-monophosphate (from uridine 5-triphosphate), a reaction catalyzed by the N-terminal domain. In Gloeobacter violaceus (strain ATCC 29082 / PCC 7421), this protein is Bifunctional protein GlmU.